A 415-amino-acid polypeptide reads, in one-letter code: Serine/threonine transporter SstT (415 aa).

The next 8 membrane-spanning stretches (helical) occupy residues 23-43, 47-67, 85-105, 144-164, 181-201, 220-240, 293-313, and 333-353; these read ILIG…AAIA, LGTL…LMLV, ILFL…LFSF, ALLN…GFAL, AVTF…FGLV, LLVL…LLVF, IPLG…VLTL, and VVAS…LLLI.

The protein belongs to the dicarboxylate/amino acid:cation symporter (DAACS) (TC 2.A.23) family.

The protein resides in the cell inner membrane. It carries out the reaction L-serine(in) + Na(+)(in) = L-serine(out) + Na(+)(out). The enzyme catalyses L-threonine(in) + Na(+)(in) = L-threonine(out) + Na(+)(out). In terms of biological role, involved in the import of serine and threonine into the cell, with the concomitant import of sodium (symport system). This chain is Serine/threonine transporter SstT, found in Klebsiella pneumoniae (strain 342).